A 386-amino-acid chain; its full sequence is Ribonuclease D (386 aa).

Residues 3–174 (HTITTTDELA…EIYEYLSAEL (172 aa)) enclose the 3'-5' exonuclease domain. Residues 213–294 (SGRVVAIAQQ…ARGMSVPNSE (82 aa)) form the HRDC domain.

Belongs to the RNase D family. The cofactor is a divalent metal cation.

Its subcellular location is the cytoplasm. It catalyses the reaction Exonucleolytic cleavage that removes extra residues from the 3'-terminus of tRNA to produce 5'-mononucleotides.. In terms of biological role, exonuclease involved in the 3' processing of various precursor tRNAs. Initiates hydrolysis at the 3'-terminus of an RNA molecule and releases 5'-mononucleotides. The chain is Ribonuclease D from Jannaschia sp. (strain CCS1).